Consider the following 108-residue polypeptide: UPF0102 protein Tpet_0671 (108 aa).

The protein belongs to the UPF0102 family.

This Thermotoga petrophila (strain ATCC BAA-488 / DSM 13995 / JCM 10881 / RKU-1) protein is UPF0102 protein Tpet_0671.